A 530-amino-acid polypeptide reads, in one-letter code: Phosphoenolpyruvate carboxykinase (ATP) (530 aa).

Residues Arg56, Tyr196, and Lys202 each contribute to the substrate site. ATP-binding positions include Lys202, His221, and 237–245 (GLSGTGKTT). Positions 202 and 221 each coordinate Mn(2+). Asp258 provides a ligand contact to Mn(2+). Residues Glu286, Arg322, 438-439 (RI), and Thr444 contribute to the ATP site. Position 322 (Arg322) interacts with substrate.

It belongs to the phosphoenolpyruvate carboxykinase (ATP) family. In terms of assembly, monomer. It depends on Mn(2+) as a cofactor.

It is found in the cytoplasm. It catalyses the reaction oxaloacetate + ATP = phosphoenolpyruvate + ADP + CO2. It participates in carbohydrate biosynthesis; gluconeogenesis. In terms of biological role, involved in the gluconeogenesis. Catalyzes the conversion of oxaloacetate (OAA) to phosphoenolpyruvate (PEP) through direct phosphoryl transfer between the nucleoside triphosphate and OAA. This chain is Phosphoenolpyruvate carboxykinase (ATP), found in Photobacterium profundum (strain SS9).